The primary structure comprises 434 residues: F-box/LRR-repeat protein 21 (434 aa).

Positions 39 to 85 (LLDWGTLPHHVILQIFQYLPLIDRARASSVCRRWNEVFHIPDLWRKF) constitute an F-box domain. LRR repeat units follow at residues 187–213 (DTPVDDPSLKILVANNSDTLRLLKMSS), 214–239 (CPHVSSDGILCVADHCQGLRELALNY), 242–265 (LSDEILLALSSETHVNLEHLRIDV), 322–347 (GRSVSRAILGRIGLNCPRLIELVVCA), 349–374 (GLLPLDSELIRIAKHCKNLTSLGLSE), and 375–400 (CEVSCSAFVEFVRLCGRRLTQLSIME).

As to quaternary structure, part of the SCF (SKP1-CUL1-F-box) E3 ubiquitin-protein ligase complex SCF(FBXL21) composed of CUL1, SKP1, RBX1 and FBXL21. Interacts with CRY1 and CRY2. As to expression, expressed in the hypothalamus, especially in the suprachiasmatic nucleus (SCN). Expression is driven by the core-clock. There is a pronounced diurnal and circadian expression rhythms rising rapidly at the start of the day and declining at the onset of the night.

It is found in the cytoplasm. The protein resides in the cytosol. It localises to the nucleus. The protein operates within protein modification; protein ubiquitination. Its function is as follows. Substrate-recognition component of the SCF(FBXL21) E3 ubiquitin ligase complex involved in circadian rhythm function. Plays a key role in the maintenance of both the speed and the robustness of the circadian clock oscillation. The SCF(FBXL21) complex mainly acts in the cytosol and mediates ubiquitination of CRY proteins (CRY1 and CRY2), leading to CRY proteins stabilization. The SCF(FBXL21) complex counteracts the activity of the SCF(FBXL3) complex and protects CRY proteins from degradation. Involved in the hypothalamic suprachiasmatic nucleus (SCN) clock regulating temporal organization of the daily activities. The protein is F-box/LRR-repeat protein 21 (Fbxl21) of Mus musculus (Mouse).